Consider the following 542-residue polypeptide: Chaperonin GroEL (542 aa).

ATP-binding positions include 29 to 32 (TLGP), 86 to 90 (DGTTT), Gly413, and Asp494.

The protein belongs to the chaperonin (HSP60) family. In terms of assembly, forms a cylinder of 14 subunits composed of two heptameric rings stacked back-to-back. Interacts with the co-chaperonin GroES.

The protein resides in the cytoplasm. The enzyme catalyses ATP + H2O + a folded polypeptide = ADP + phosphate + an unfolded polypeptide.. In terms of biological role, together with its co-chaperonin GroES, plays an essential role in assisting protein folding. The GroEL-GroES system forms a nano-cage that allows encapsulation of the non-native substrate proteins and provides a physical environment optimized to promote and accelerate protein folding. This is Chaperonin GroEL from Endomicrobium trichonymphae.